The chain runs to 495 residues: Bifunctional protein GlmU (495 aa).

Residues 1–241 (MTFPGDTAVL…SALVAGVNNR (241 aa)) are pyrophosphorylase. UDP-N-acetyl-alpha-D-glucosamine is bound by residues 12 to 15 (LAAG), lysine 26, glutamine 83, 88 to 89 (GT), 112 to 114 (SGD), glycine 151, glutamate 166, asparagine 181, and asparagine 239. A Mg(2+)-binding site is contributed by aspartate 114. Position 239 (asparagine 239) interacts with Mg(2+). The segment at 242–262 (VQLAQLASELNRRVVAAHQLA) is linker. The segment at 263-495 (GVTVVDPATT…TQPPDADQTP (233 aa)) is N-acetyltransferase. Residues arginine 344 and lysine 362 each contribute to the UDP-N-acetyl-alpha-D-glucosamine site. Histidine 374 functions as the Proton acceptor in the catalytic mechanism. UDP-N-acetyl-alpha-D-glucosamine is bound by residues tyrosine 377 and asparagine 388. Residues alanine 391, 397-398 (NY), serine 416, and alanine 434 contribute to the acetyl-CoA site. Residues 457–495 (IENWVQRKRPGSPAAQASKRASEMACQQPTQPPDADQTP) form a disordered region. Low complexity predominate over residues 483–495 (QQPTQPPDADQTP).

In the N-terminal section; belongs to the N-acetylglucosamine-1-phosphate uridyltransferase family. This sequence in the C-terminal section; belongs to the transferase hexapeptide repeat family. As to quaternary structure, homotrimer. Mg(2+) is required as a cofactor.

The protein resides in the cytoplasm. It catalyses the reaction alpha-D-glucosamine 1-phosphate + acetyl-CoA = N-acetyl-alpha-D-glucosamine 1-phosphate + CoA + H(+). It carries out the reaction N-acetyl-alpha-D-glucosamine 1-phosphate + UTP + H(+) = UDP-N-acetyl-alpha-D-glucosamine + diphosphate. It participates in nucleotide-sugar biosynthesis; UDP-N-acetyl-alpha-D-glucosamine biosynthesis; N-acetyl-alpha-D-glucosamine 1-phosphate from alpha-D-glucosamine 6-phosphate (route II): step 2/2. The protein operates within nucleotide-sugar biosynthesis; UDP-N-acetyl-alpha-D-glucosamine biosynthesis; UDP-N-acetyl-alpha-D-glucosamine from N-acetyl-alpha-D-glucosamine 1-phosphate: step 1/1. Its pathway is bacterial outer membrane biogenesis; LPS lipid A biosynthesis. In terms of biological role, catalyzes the last two sequential reactions in the de novo biosynthetic pathway for UDP-N-acetylglucosamine (UDP-GlcNAc). The C-terminal domain catalyzes the transfer of acetyl group from acetyl coenzyme A to glucosamine-1-phosphate (GlcN-1-P) to produce N-acetylglucosamine-1-phosphate (GlcNAc-1-P), which is converted into UDP-GlcNAc by the transfer of uridine 5-monophosphate (from uridine 5-triphosphate), a reaction catalyzed by the N-terminal domain. The protein is Bifunctional protein GlmU of Mycobacterium bovis (strain ATCC BAA-935 / AF2122/97).